Consider the following 197-residue polypeptide: uncharacterized protein (197 aa).

A run of 4 helical transmembrane segments spans residues 9 to 29, 67 to 87, 104 to 124, and 160 to 180; these read IYILQTLGSLYLLIVLLRFIL, LASLVLAILIQLVLMILILML, IIAVTSLFLKVFFFALIISVI, and GLDLSPIFAFLALKLIDMLVI.

Belongs to the YggT family.

The protein resides in the cell membrane. This is an uncharacterized protein from Pseudomonas aeruginosa (strain ATCC 15692 / DSM 22644 / CIP 104116 / JCM 14847 / LMG 12228 / 1C / PRS 101 / PAO1).